The primary structure comprises 152 residues: Melatonin receptor type 1B (152 aa).

The Cytoplasmic portion of the chain corresponds to 1 to 12 (HSFVYEKLFSLW). The chain crosses the membrane as a helical span at residues 13–33 (NTILYVCLIWTLTVVATVPNF). Over 34–57 (FVGSLEYDPRIYSCTFVQTVSSSY) the chain is Extracellular. A helical membrane pass occupies residues 58-78 (TITVVVIHFILPITVVTFCYL). Over 79-110 (RIWILVIQVRRKVKSEFKPRMKQSDFRNFLTM) the chain is Cytoplasmic. A helical membrane pass occupies residues 111 to 131 (FVVFVIFAFCWAPLNFIGLAV). The Extracellular portion of the chain corresponds to 132 to 144 (SINPTEVAPKIPE). The chain crosses the membrane as a helical span at residues 145-152 (WLFVVSYF).

Belongs to the G-protein coupled receptor 1 family.

The protein resides in the cell membrane. Its function is as follows. High affinity receptor for melatonin. The activity of this receptor is mediated by pertussis toxin sensitive G proteins that inhibits adenylate cyclase activity. The polypeptide is Melatonin receptor type 1B (mtnr1b) (Xenopus laevis (African clawed frog)).